The primary structure comprises 249 residues: tRNA (guanine-N(1)-)-methyltransferase (249 aa).

Residues Gly-117 and 137-142 (LGDFVL) each bind S-adenosyl-L-methionine.

Belongs to the RNA methyltransferase TrmD family. In terms of assembly, homodimer.

The protein resides in the cytoplasm. The catalysed reaction is guanosine(37) in tRNA + S-adenosyl-L-methionine = N(1)-methylguanosine(37) in tRNA + S-adenosyl-L-homocysteine + H(+). Its function is as follows. Specifically methylates guanosine-37 in various tRNAs. This Janthinobacterium sp. (strain Marseille) (Minibacterium massiliensis) protein is tRNA (guanine-N(1)-)-methyltransferase.